Reading from the N-terminus, the 394-residue chain is 4-hydroxybenzoate 3-monooxygenase (NAD(P)H) (394 aa).

FAD is bound by residues E32, 42-47, and Q102; that span reads TIRAGV. Residues Y203, 214-216, and Y224 contribute to the substrate site; that span reads STR. D288 is a binding site for FAD. Residue P295 participates in substrate binding. Residue 301-302 coordinates FAD; it reads LN.

This sequence belongs to the aromatic-ring hydroxylase family. It depends on FAD as a cofactor.

The catalysed reaction is 4-hydroxybenzoate + NADH + O2 + H(+) = 3,4-dihydroxybenzoate + NAD(+) + H2O. It catalyses the reaction 4-hydroxybenzoate + NADPH + O2 + H(+) = 3,4-dihydroxybenzoate + NADP(+) + H2O. Involved in the degradation of 4-hydroxybenzoate (4HB) via the protocatechuate (PCA) 2,3-cleavage pathway. Catalyzes the conversion of 4HB into 2-hydroxypenta-2,4-dienoate (HPD). It is highly specific for 4-hydroxybenzoate, and is able to utilize both NADH and NADPH as electron donors at approximately equal rates. This is 4-hydroxybenzoate 3-monooxygenase (NAD(P)H) (praI) from Paenibacillus sp.